The sequence spans 22 residues: Caerin-3.1 (22 aa).

K22 bears the Lysine amide mark.

Belongs to the frog skin active peptide (FSAP) family. Caerin subfamily. Expressed by the skin dorsal glands.

It is found in the secreted. Functionally, antibacterial peptide with narrow spectrum of activity. Inhibits the formation of NO by neuronal nitric oxide synthase. The protein is Caerin-3.1 of Litoria rothii (Roth's tree frog).